Consider the following 757-residue polypeptide: Cellulose synthase-like protein B1 (757 aa).

A run of 2 helical transmembrane segments spans residues T18–L38 and V50–C70. Residue D136 is part of the active site. A coiled-coil region spans residues E186–D216. Residue D462 is part of the active site. 6 helical membrane-spanning segments follow: residues L533 to L553, L569 to F589, L615 to I635, F674 to G694, A710 to F730, and T737 to V757.

It belongs to the glycosyltransferase 2 family. Plant cellulose synthase-like B subfamily. Expressed in young seedlings, primarily in the vascular tissue.

The protein localises to the golgi apparatus membrane. In terms of biological role, thought to be a Golgi-localized beta-glycan synthase that polymerize the backbones of noncellulosic polysaccharides (hemicelluloses) of plant cell wall. The sequence is that of Cellulose synthase-like protein B1 (CSLB1) from Arabidopsis thaliana (Mouse-ear cress).